A 190-amino-acid chain; its full sequence is Molybdenum cofactor guanylyltransferase (190 aa).

Residues 8–10 (LAG), lysine 20, aspartate 64, and aspartate 98 contribute to the GTP site. Position 98 (aspartate 98) interacts with Mg(2+).

It belongs to the MobA family. As to quaternary structure, monomer. Requires Mg(2+) as cofactor.

The protein resides in the cytoplasm. The enzyme catalyses Mo-molybdopterin + GTP + H(+) = Mo-molybdopterin guanine dinucleotide + diphosphate. Functionally, transfers a GMP moiety from GTP to Mo-molybdopterin (Mo-MPT) cofactor (Moco or molybdenum cofactor) to form Mo-molybdopterin guanine dinucleotide (Mo-MGD) cofactor. The protein is Molybdenum cofactor guanylyltransferase of Rhodobacter capsulatus (Rhodopseudomonas capsulata).